A 671-amino-acid chain; its full sequence is DNA ligase (671 aa).

NAD(+) is bound by residues 32 to 36, 81 to 82, and E113; these read DAEYD and SL. Catalysis depends on K115, which acts as the N6-AMP-lysine intermediate. The NAD(+) site is built by R136, E173, K290, and K314. Zn(2+) is bound by residues C408, C411, C426, and C432. In terms of domain architecture, BRCT spans 593 to 671; it reads EIDSPFAGKT…EAEMLRLLGS (79 aa).

This sequence belongs to the NAD-dependent DNA ligase family. LigA subfamily. The cofactor is Mg(2+). Mn(2+) is required as a cofactor.

It carries out the reaction NAD(+) + (deoxyribonucleotide)n-3'-hydroxyl + 5'-phospho-(deoxyribonucleotide)m = (deoxyribonucleotide)n+m + AMP + beta-nicotinamide D-nucleotide.. In terms of biological role, DNA ligase that catalyzes the formation of phosphodiester linkages between 5'-phosphoryl and 3'-hydroxyl groups in double-stranded DNA using NAD as a coenzyme and as the energy source for the reaction. It is essential for DNA replication and repair of damaged DNA. The protein is DNA ligase of Shigella flexneri serotype 5b (strain 8401).